The sequence spans 349 residues: Histidinol-phosphate aminotransferase (349 aa).

Lysine 210 carries the post-translational modification N6-(pyridoxal phosphate)lysine.

The protein belongs to the class-II pyridoxal-phosphate-dependent aminotransferase family. Histidinol-phosphate aminotransferase subfamily. As to quaternary structure, homodimer. It depends on pyridoxal 5'-phosphate as a cofactor.

It catalyses the reaction L-histidinol phosphate + 2-oxoglutarate = 3-(imidazol-4-yl)-2-oxopropyl phosphate + L-glutamate. The protein operates within amino-acid biosynthesis; L-histidine biosynthesis; L-histidine from 5-phospho-alpha-D-ribose 1-diphosphate: step 7/9. This Flavobacterium johnsoniae (strain ATCC 17061 / DSM 2064 / JCM 8514 / BCRC 14874 / CCUG 350202 / NBRC 14942 / NCIMB 11054 / UW101) (Cytophaga johnsonae) protein is Histidinol-phosphate aminotransferase.